A 205-amino-acid polypeptide reads, in one-letter code: Urease accessory protein UreE (205 aa).

Positions 170–192 (EHHGHSHSHSHDHDHDHDHDHQH) are enriched in basic and acidic residues. Residues 170 to 205 (EHHGHSHSHSHDHDHDHDHDHQHGPCCSHGHHHGHR) form a disordered region.

This sequence belongs to the UreE family.

The protein localises to the cytoplasm. Involved in urease metallocenter assembly. Binds nickel. Probably functions as a nickel donor during metallocenter assembly. This chain is Urease accessory protein UreE, found in Burkholderia pseudomallei (strain 668).